The sequence spans 533 residues: Death domain-containing ATP nucleosidase (533 aa).

Positions 1-262 are death domain; the sequence is MDAAAIISLL…TAAGKEEKVS (262 aa). Positions 184 to 248 are disordered; the sequence is STFVSDDATQ…TQTSTNSFNS (65 aa). Over residues 218–227 the composition is skewed to polar residues; the sequence is PSAQVNQPPT. The span at 236 to 248 shows a compositional bias: low complexity; sequence SGSTQTSTNSFNS. Positions 263–533 are purine nucleoside phosphorylase domain; the sequence is DDVTKGIKFL…HLDDDRTIHM (271 aa).

It catalyses the reaction ATP + H2O = D-ribose 5-triphosphate + adenine. The enzyme catalyses dATP + H2O = 2-deoxyribose 5-triphosphate + adenine. The C-terminal purine nucleoside phosphorylase (PNP) domain cleaves the N-glycosidic bond of ATP, and to a lesser extent dATP, to release adenine and a sugar triphosphate; has weak activity on ADP and AMP and no activity on dADP, dAMP, adenosine, deoxyadenosine or other (d)NTPs. This chain is Death domain-containing ATP nucleosidase (109585858), found in Amphimedon queenslandica (Sponge).